The primary structure comprises 57 residues: MPFTASDICKIILAIILPPVGVFLERGCGADFFINILLTILGYIPGIIHALYIILKY.

The next 2 membrane-spanning stretches (helical) occupy residues 3 to 23 (FTASDICKIILAIILPPVGVF) and 34 to 54 (INILLTILGYIPGIIHALYII).

Belongs to the UPF0057 (PMP3) family.

It localises to the cell membrane. Plays a role in the regulation of membrane potential. Could mediate a proton leak. This chain is Plasma membrane proteolipid 3 (PMP3), found in Gibberella zeae (strain ATCC MYA-4620 / CBS 123657 / FGSC 9075 / NRRL 31084 / PH-1) (Wheat head blight fungus).